The following is a 28-amino-acid chain: Peptide 2 (28 aa).

The protein belongs to the short scorpion toxin superfamily. Potassium channel inhibitor family. Alpha-KTx 09 subfamily. In terms of tissue distribution, expressed by the venom gland.

It is found in the secreted. Its function is as follows. Blocks potassium channels. This Hottentotta tamulus sindicus (Scorpion) protein is Peptide 2.